Reading from the N-terminus, the 283-residue chain is Non-selective voltage-gated ion channel VDAC1 (283 aa).

Alanine 2 is subject to N-acetylalanine. Residue lysine 12 participates in ATP binding. Lysine 12 participates in a covalent cross-link: Glycyl lysine isopeptide (Lys-Gly) (interchain with G-Cter in ubiquitin). Position 13 is a phosphoserine (serine 13). Threonine 19 carries the phosphothreonine modification. Position 20 (lysine 20) interacts with ATP. N6-acetyllysine; alternate is present on lysine 20. Lysine 20 bears the N6-succinyllysine; alternate mark. Residue lysine 20 forms a Glycyl lysine isopeptide (Lys-Gly) (interchain with G-Cter in ubiquitin); alternate linkage. 2 consecutive transmembrane segments (beta stranded) span residues 26 to 35 (LIKLDLKTKS) and 39 to 47 (LEFTSSGSA). Glycyl lysine isopeptide (Lys-Gly) (interchain with G-Cter in ubiquitin) cross-links involve residues lysine 53 and lysine 61. A beta stranded transmembrane segment spans residues 54–64 (VTGSLETKYRW). The residue at position 67 (tyrosine 67) is a Phosphotyrosine. The next 3 beta stranded transmembrane spans lie at 69 to 76 (LTFTEKWN), 80 to 89 (TLGTEITVED), and 95 to 104 (LKLTFDSSFS). Threonine 107 bears the Phosphothreonine mark. An N6-acetyllysine; alternate modification is found at lysine 109. Lysine 109 participates in a covalent cross-link: Glycyl lysine isopeptide (Lys-Gly) (interchain with G-Cter in ubiquitin); alternate. Lysine 110 is covalently cross-linked (Glycyl lysine isopeptide (Lys-Gly) (interchain with G-Cter in ubiquitin)). Transmembrane regions (beta stranded) follow at residues 111 to 120 (NAKIKTGYKR), 123 to 130 (INLGCDMD), 137 to 145 (SIRGALVLG), and 150 to 158 (LAGYQMNFE). A Glycyl lysine isopeptide (Lys-Gly) (interchain with G-Cter in ubiquitin) cross-link involves residue lysine 161. 6 beta stranded membrane passes run 163–175 (RVTQSNFAVGYKT), 178–185 (FQLHTNVN), 189–198 (EFGGSIYQKV), 202–211 (LETAVNLAWT), 218–227 (RFGIAAKYQI), and 231–238 (ACFSAKVN). Position 193 is a phosphoserine; by NEK1 (serine 193). Phosphoserine is present on serine 240. 242–244 (LIG) is an NAD(+) binding site. The chain crosses the membrane as a beta stranded span at residues 242–251 (LIGLGYTQTL). Lysine 252 bears the N6-acetyllysine mark. The beta stranded transmembrane segment at 254-263 (GIKLTLSALL) threads the bilayer. 260 to 264 (SALLD) is an NAD(+) binding site. Lysine 266 is subject to N6-acetyllysine; alternate. Residue lysine 266 forms a Glycyl lysine isopeptide (Lys-Gly) (interchain with G-Cter in ubiquitin); alternate linkage. The beta stranded transmembrane segment at 273–282 (HKLGLGLEFQ) threads the bilayer. Lysine 274 is covalently cross-linked (Glycyl lysine isopeptide (Lys-Gly) (interchain with G-Cter in ubiquitin)).

Belongs to the eukaryotic mitochondrial porin family. In terms of assembly, homodimer and homotrimer; in response to cyclic AMP or calcium; oligomerization is required for scramblase activity. Component of the mitochondrial permeability transition pore complex (mPTPC), at least composed of SPG7, VDAC1 and PPIF. Interacts with SPG7, NIPSNAP2 and SLC25A30. Interacts with hexokinases including HK1. The HK1-VDAC1 complex interacts with ATF2. Interacts with BCL2L1. Interacts with BAK1. Interacts with RTL10/BOP (via BH3 domain). Interacts with amyloid-beta and APP; induces VDAC1 dephosphorylation. Interacts with TMEM41B. Interacts with BCAP31. Interacts with HSPA9; this interaction couples ITPR1 to VDAC1. As to quaternary structure, (Microbial infection) Interacts with influenza A virus PB1-F2 protein. In terms of processing, phosphorylation at Ser-193 by NEK1 promotes the closed conformational state preventing excessive mitochondrial membrane permeability and subsequent apoptotic cell death after injury. Phosphorylation by the AKT-GSK3B axis stabilizes the protein probably by preventing ubiquitin-mediated proteasomal degradation. Ubiquitinated. Undergoes monoubiquitination and polyubiquitination by PRKN; monoubiquitination at Lys-274 inhibits apoptosis, whereas polyubiquitination leads to its degradation and promotes mitophagy. Deubiquitinated by USP30. As to expression, expressed in erythrocytes (at protein level). Expressed in heart, liver and skeletal muscle.

It is found in the mitochondrion outer membrane. Its subcellular location is the cell membrane. It localises to the membrane raft. It carries out the reaction chloride(in) = chloride(out). It catalyses the reaction K(+)(in) = K(+)(out). The enzyme catalyses ATP(in) = ATP(out). The catalysed reaction is Ca(2+)(in) = Ca(2+)(out). It carries out the reaction Na(+)(in) = Na(+)(out). It catalyses the reaction Mg(2+)(in) = Mg(2+)(out). The enzyme catalyses L-glutamate(out) = L-glutamate(in). The catalysed reaction is dopamine(out) = dopamine(in). It carries out the reaction acetylcholine(in) = acetylcholine(out). It catalyses the reaction Fe(III)-[cytochrome c](out) = Fe(III)-[cytochrome c](in). The enzyme catalyses a 1,2-diacyl-sn-glycero-3-phosphocholine(in) = a 1,2-diacyl-sn-glycero-3-phosphocholine(out). The catalysed reaction is a 1,2-diacyl-sn-glycero-3-phospho-L-serine(in) = a 1,2-diacyl-sn-glycero-3-phospho-L-serine(out). Its activity is regulated as follows. Inhibited by nitric oxide. Functionally, non-selective voltage-gated ion channel that mediates the transport of anions and cations through the mitochondrion outer membrane and plasma membrane. The channel at the outer mitochondrial membrane allows diffusion of small hydrophilic molecules; in the plasma membrane it is involved in cell volume regulation and apoptosis. It adopts an open conformation at low or zero membrane potential and a closed conformation at potentials above 30-40 mV. The open state has a weak anion selectivity whereas the closed state is cation-selective. Binds various signaling molecules, including the sphingolipid ceramide, the phospholipid phosphatidylcholine, and the sterols cholesterol and oxysterol. In depolarized mitochondria, acts downstream of PRKN and PINK1 to promote mitophagy or prevent apoptosis; polyubiquitination by PRKN promotes mitophagy, while monoubiquitination by PRKN decreases mitochondrial calcium influx which ultimately inhibits apoptosis. May participate in the formation of the permeability transition pore complex (PTPC) responsible for the release of mitochondrial products that triggers apoptosis. May mediate ATP export from cells. Part of a complex composed of HSPA9, ITPR1 and VDAC1 that regulates mitochondrial calcium-dependent apoptosis by facilitating calcium transport from the ER lumen to the mitochondria intermembrane space thus providing calcium for the downstream calcium channel MCU that directly releases it into mitochondria matrix. Mediates cytochrome c efflux. Its function is as follows. Catalyzes the scrambling of phospholipids across the outer mitochondrial membrane; the mechanism is unrelated to channel activity and is capable of translocating both anionic and zwitterionic phospholipids. This chain is Non-selective voltage-gated ion channel VDAC1, found in Homo sapiens (Human).